A 287-amino-acid polypeptide reads, in one-letter code: Cyclopropane mycolic acid synthase 1 (287 aa).

Residues 33–34 (YS), 68–76 (LLDVGCGWG), 94–99 (TLSKNQ), and 123–124 (WE) contribute to the S-adenosyl-L-methionine site. The active site involves Cys269.

The protein belongs to the CFA/CMAS family. Homodimer.

The protein resides in the cytoplasm. The catalysed reaction is a 1-acyl-2-(9Z)-enoyl-sn-glycero-3-phospholipid + S-adenosyl-L-methionine = a 1-acyl-2-(9-cyclopronane)-acyl-sn-glycero-3-phospholipid + S-adenosyl-L-homocysteine + H(+). It participates in lipid metabolism; mycolic acid biosynthesis. Its function is as follows. Catalyzes the conversion of a double bond to a cyclopropane ring at the distal position of an alpha mycolic acid via the transfer of a methylene group from S-adenosyl-L-methionine. Cyclopropanated mycolic acids are key factors participating in cell envelope permeability, host immunomodulation and persistence. The chain is Cyclopropane mycolic acid synthase 1 (cmaA1) from Mycobacterium tuberculosis (strain CDC 1551 / Oshkosh).